We begin with the raw amino-acid sequence, 361 residues long: tRNA-specific 2-thiouridylase MnmA (361 aa).

ATP-binding positions include 9 to 16 and Met35; that span reads GMSGGVDS. Positions 95–97 are interaction with target base in tRNA; the sequence is NPD. Cys100 functions as the Nucleophile in the catalytic mechanism. Residues Cys100 and Cys196 are joined by a disulfide bond. Residue Gly124 coordinates ATP. The segment at 146 to 148 is interaction with tRNA; it reads KDQ. The active-site Cysteine persulfide intermediate is Cys196. The segment at 308–309 is interaction with tRNA; it reads RY.

This sequence belongs to the MnmA/TRMU family.

It is found in the cytoplasm. It catalyses the reaction S-sulfanyl-L-cysteinyl-[protein] + uridine(34) in tRNA + AH2 + ATP = 2-thiouridine(34) in tRNA + L-cysteinyl-[protein] + A + AMP + diphosphate + H(+). Functionally, catalyzes the 2-thiolation of uridine at the wobble position (U34) of tRNA, leading to the formation of s(2)U34. This chain is tRNA-specific 2-thiouridylase MnmA, found in Nitrosomonas eutropha (strain DSM 101675 / C91 / Nm57).